The sequence spans 359 residues: Ferredoxin--NADP reductase (359 aa).

Residues aspartate 48, glutamine 56, tyrosine 61, alanine 101, phenylalanine 139, aspartate 304, and serine 345 each coordinate FAD.

This sequence belongs to the ferredoxin--NADP reductase type 2 family. Homodimer. The cofactor is FAD.

It carries out the reaction 2 reduced [2Fe-2S]-[ferredoxin] + NADP(+) + H(+) = 2 oxidized [2Fe-2S]-[ferredoxin] + NADPH. This chain is Ferredoxin--NADP reductase, found in Ralstonia pickettii (strain 12J).